A 210-amino-acid chain; its full sequence is A-kinase-interacting protein 1 (210 aa).

2 disordered regions span residues 58–80 and 136–162; these read HLEK…ERPP and QRKD…EASQ.

In terms of assembly, interacts with PRKACA and RELA. In terms of tissue distribution, expressed at high levels in adult heart and at lower levels in brain, testis, ovary and skeletal muscle. Up-regulated in some breast cancer cell lines. Isoform 1 and isoform 3 are expressed in fetal brain.

The protein localises to the nucleus. Its function is as follows. Enhances NF-kappa-B transcriptional activity by regulating the nuclear localization of the NF-kappa-B subunit RELA and promoting the phosphorylation of RELA by PRKACA. Regulates the effect of the cAMP-dependent protein kinase signaling pathway on the NF-kappa-B activation cascade. This chain is A-kinase-interacting protein 1 (AKIP1), found in Homo sapiens (Human).